Reading from the N-terminus, the 354-residue chain is Peptide chain release factor 1 (354 aa).

At Q230 the chain carries N5-methylglutamine.

Belongs to the prokaryotic/mitochondrial release factor family. Post-translationally, methylated by PrmC. Methylation increases the termination efficiency of RF1.

The protein resides in the cytoplasm. Peptide chain release factor 1 directs the termination of translation in response to the peptide chain termination codons UAG and UAA. The polypeptide is Peptide chain release factor 1 (Novosphingobium aromaticivorans (strain ATCC 700278 / DSM 12444 / CCUG 56034 / CIP 105152 / NBRC 16084 / F199)).